The following is a 519-amino-acid chain: 3-octaprenyl-4-hydroxybenzoate carboxy-lyase (519 aa).

Mn(2+) is bound at residue Asn-177. Prenylated FMN contacts are provided by residues 180 to 182 (IYR), 194 to 196 (RWL), and 199 to 200 (RG). Position 243 (Glu-243) interacts with Mn(2+). Asp-318 acts as the Proton donor in catalysis.

The protein belongs to the UbiD family. Homohexamer. The cofactor is prenylated FMN. Mn(2+) is required as a cofactor.

It localises to the cell membrane. It carries out the reaction a 4-hydroxy-3-(all-trans-polyprenyl)benzoate + H(+) = a 2-(all-trans-polyprenyl)phenol + CO2. The protein operates within cofactor biosynthesis; ubiquinone biosynthesis. Catalyzes the decarboxylation of 3-octaprenyl-4-hydroxy benzoate to 2-octaprenylphenol, an intermediate step in ubiquinone biosynthesis. This Burkholderia mallei (strain ATCC 23344) protein is 3-octaprenyl-4-hydroxybenzoate carboxy-lyase.